Reading from the N-terminus, the 452-residue chain is Sodium-coupled neutral amino acid transporter 7 (452 aa).

The next 11 membrane-spanning stretches (helical) occupy residues 46 to 66 (AVFIVVNAALGAGLLNFPAAF), 74 to 94 (AAISLQLVLLLFIISGLVILA), 120 to 140 (LCEVLIAVYTFGTCIAFFIII), 168 to 188 (FTISVTGVLLILPLSLPREIS), 195 to 215 (FLSVLGTCYVTVVVVVRCIWP), 234 to 256 (VFNAVPTICFGYQCHVSSVPVYG), 272 to 292 (IAMFIALCVYTGTGVCGFLLF), 309 to 329 (IAVAVARAFIILCVLTSYPIL), 361 to 381 (VLQTVIWFLLTLLLALFIPDI), 385 to 405 (ISLIGGLAACFIFIFPGLCLI), and 419 to 439 (SWWALLSYGVIMVTIGTFIFG).

It belongs to the amino acid/polyamine transporter 2 family.

The protein resides in the lysosome membrane. Its subcellular location is the cell projection. It localises to the axon. It catalyses the reaction L-asparagine(in) + Na(+)(in) = L-asparagine(out) + Na(+)(out). The enzyme catalyses L-glutamine(in) + Na(+)(in) = L-glutamine(out) + Na(+)(out). In terms of biological role, symporter that selectively cotransports sodium ions and amino acids, such as L-glutamine and L-asparagine from the lysosome into the cytoplasm and may participates in mTORC1 activation. The transport activity requires an acidic lysosomal lumen. The sequence is that of Sodium-coupled neutral amino acid transporter 7 from Xenopus laevis (African clawed frog).